Consider the following 209-residue polypeptide: Ribonuclease HII (209 aa).

Residues 7-198 (GPVAGVDEAG…VAKAHQEWLH (192 aa)) form the RNase H type-2 domain. A divalent metal cation-binding residues include Asp13, Glu14, and Asp107.

It belongs to the RNase HII family. Mn(2+) serves as cofactor. Requires Mg(2+) as cofactor.

Its subcellular location is the cytoplasm. The enzyme catalyses Endonucleolytic cleavage to 5'-phosphomonoester.. Its function is as follows. Endonuclease that specifically degrades the RNA of RNA-DNA hybrids. This Corynebacterium glutamicum (strain R) protein is Ribonuclease HII.